A 150-amino-acid polypeptide reads, in one-letter code: Large ribosomal subunit protein uL13 (150 aa).

The protein belongs to the universal ribosomal protein uL13 family. Part of the 50S ribosomal subunit.

Its function is as follows. This protein is one of the early assembly proteins of the 50S ribosomal subunit, although it is not seen to bind rRNA by itself. It is important during the early stages of 50S assembly. The chain is Large ribosomal subunit protein uL13 from Chlorobaculum parvum (strain DSM 263 / NCIMB 8327) (Chlorobium vibrioforme subsp. thiosulfatophilum).